The following is a 148-amino-acid chain: Deoxyuridine 5'-triphosphate nucleotidohydrolase (148 aa).

Substrate is bound by residues 67 to 69 (RSG), asparagine 80, 84 to 86 (LID), and methionine 94.

The protein belongs to the dUTPase family. It depends on Mg(2+) as a cofactor.

It carries out the reaction dUTP + H2O = dUMP + diphosphate + H(+). It functions in the pathway pyrimidine metabolism; dUMP biosynthesis; dUMP from dCTP (dUTP route): step 2/2. Functionally, this enzyme is involved in nucleotide metabolism: it produces dUMP, the immediate precursor of thymidine nucleotides and it decreases the intracellular concentration of dUTP so that uracil cannot be incorporated into DNA. The polypeptide is Deoxyuridine 5'-triphosphate nucleotidohydrolase (Burkholderia thailandensis (strain ATCC 700388 / DSM 13276 / CCUG 48851 / CIP 106301 / E264)).